A 169-amino-acid chain; its full sequence is Transcription antitermination protein NusB (169 aa).

Belongs to the NusB family.

Its function is as follows. Involved in transcription antitermination. Required for transcription of ribosomal RNA (rRNA) genes. Binds specifically to the boxA antiterminator sequence of the ribosomal RNA (rrn) operons. This Deinococcus geothermalis (strain DSM 11300 / CIP 105573 / AG-3a) protein is Transcription antitermination protein NusB.